A 310-amino-acid polypeptide reads, in one-letter code: Formimidoylglutamase (310 aa).

The Mn(2+) site is built by histidine 120, aspartate 148, histidine 150, aspartate 152, aspartate 233, and aspartate 235.

Belongs to the arginase family. The cofactor is Mn(2+).

The catalysed reaction is N-formimidoyl-L-glutamate + H2O = formamide + L-glutamate. The protein operates within amino-acid degradation; L-histidine degradation into L-glutamate; L-glutamate from N-formimidoyl-L-glutamate (hydrolase route): step 1/1. Its function is as follows. Catalyzes the conversion of N-formimidoyl-L-glutamate to L-glutamate and formamide. This Nocardia farcinica (strain IFM 10152) protein is Formimidoylglutamase.